Reading from the N-terminus, the 162-residue chain is Ribose-5-phosphate isomerase B (162 aa).

D-ribulose 5-phosphate contacts are provided by residues 11-12 and 70-74; these read DH and GSGNG. Glu-75 serves as the catalytic Proton acceptor. The active-site Proton donor is His-102. D-ribulose 5-phosphate contacts are provided by Asn-103, Arg-113, Arg-137, and Arg-141.

The protein belongs to the LacAB/RpiB family. As to quaternary structure, homodimer.

It catalyses the reaction aldehydo-D-ribose 5-phosphate = D-ribulose 5-phosphate. Its pathway is carbohydrate degradation; pentose phosphate pathway; D-ribose 5-phosphate from D-ribulose 5-phosphate (non-oxidative stage): step 1/1. In terms of biological role, catalyzes the interconversion of ribulose-5-P and ribose-5-P. The chain is Ribose-5-phosphate isomerase B from Mycobacterium leprae (strain TN).